Consider the following 366-residue polypeptide: Short-chain collagen C4 (366 aa).

Positions 1–14 are enriched in low complexity; that stretch reads DTGPQGPQGVAGPP. Triple-helical region regions lie at residues 1–23 and 40–210; these read DTGP…KGDK and GPPG…NGAV. Positions 1–207 are disordered; the sequence is DTGPQGPQGV…QGPQGAPGSN (207 aa). A compositionally biased stretch (pro residues) spans 28 to 45; the sequence is YPPPPTCPTCPAGPPGAP. 2 stretches are compositionally biased toward low complexity: residues 75-90 and 99-110; these read PGND…PGYD and TGAPGPQGPKGD. A compositionally biased stretch (basic and acidic residues) spans 138–149; the sequence is DGQDGAKGDKGD. Composition is skewed to low complexity over residues 150 to 168 and 189 to 201; these read QGPA…QGPA and QGPK…QGPQ.

The protein resides in the secreted. The protein localises to the extracellular space. It localises to the extracellular matrix. This Ephydatia muelleri (Mueller's freshwater sponge) protein is Short-chain collagen C4.